The following is a 149-amino-acid chain: Transcriptional repressor NrdR (149 aa).

The segment at 3–34 (CPFCSATDTKVIDSRLVSDGHQVRRRRQCLAC) is a zinc-finger region. Positions 49 to 139 (PKVIKSNGNR…VYRSFEDIKE (91 aa)) constitute an ATP-cone domain.

The protein belongs to the NrdR family. Zn(2+) serves as cofactor.

Negatively regulates transcription of bacterial ribonucleotide reductase nrd genes and operons by binding to NrdR-boxes. The polypeptide is Transcriptional repressor NrdR (Aliivibrio salmonicida (strain LFI1238) (Vibrio salmonicida (strain LFI1238))).